The sequence spans 210 residues: Large ribosomal subunit protein uL3 (210 aa).

A disordered region spans residues 122–155 (NQKRNNFGRGPMSHGSKNHRAPGSIGAGTTPGRV).

The protein belongs to the universal ribosomal protein uL3 family. Part of the 50S ribosomal subunit. Forms a cluster with proteins L14 and L19.

One of the primary rRNA binding proteins, it binds directly near the 3'-end of the 23S rRNA, where it nucleates assembly of the 50S subunit. The chain is Large ribosomal subunit protein uL3 from Nostoc punctiforme (strain ATCC 29133 / PCC 73102).